The following is a 179-amino-acid chain: Ubiquitin-conjugating enzyme E2 2 (179 aa).

Residues 1–28 (MSTPARRRLMRDFKRMQQDPPSGVSASP) form a disordered region. Positions 4–150 (PARRRLMRDF…VRETVENSWN (147 aa)) constitute a UBC core domain. Cys-88 (glycyl thioester intermediate) is an active-site residue. A disordered region spans residues 145 to 179 (VENSWNDDDDEEEEEEDEDEAEDEDDDDDDNIDED). Residues 149 to 179 (WNDDDDEEEEEEDEDEAEDEDDDDDDNIDED) are compositionally biased toward acidic residues. Residues 151-179 (DDDDEEEEEEDEDEAEDEDDDDDDNIDED) form an acidic tail region.

Belongs to the ubiquitin-conjugating enzyme family.

It is found in the cytoplasm. The protein resides in the nucleus. It carries out the reaction S-ubiquitinyl-[E1 ubiquitin-activating enzyme]-L-cysteine + [E2 ubiquitin-conjugating enzyme]-L-cysteine = [E1 ubiquitin-activating enzyme]-L-cysteine + S-ubiquitinyl-[E2 ubiquitin-conjugating enzyme]-L-cysteine.. It participates in protein modification; protein ubiquitination. Functionally, catalyzes the covalent attachment of ubiquitin to other proteins. Plays a role in transcription regulation by catalyzing the monoubiquitination of histone H2B to form H2BK123ub1. H2BK123ub1 gives a specific tag for epigenetic transcriptional activation and is also a prerequisite for H3K4me and H3K79me formation. Also involved in postreplication repair of UV-damaged DNA, in N-end rule-dependent protein degradation and in sporulation. This chain is Ubiquitin-conjugating enzyme E2 2 (UBC2), found in Candida albicans (strain SC5314 / ATCC MYA-2876) (Yeast).